The sequence spans 244 residues: NAD(P)H-quinone oxidoreductase subunit K (244 aa).

Residues cysteine 60, cysteine 61, cysteine 125, and cysteine 156 each contribute to the [4Fe-4S] cluster site.

This sequence belongs to the complex I 20 kDa subunit family. NDH-1 can be composed of about 15 different subunits; different subcomplexes with different compositions have been identified which probably have different functions. [4Fe-4S] cluster serves as cofactor.

It localises to the cellular thylakoid membrane. It carries out the reaction a plastoquinone + NADH + (n+1) H(+)(in) = a plastoquinol + NAD(+) + n H(+)(out). The catalysed reaction is a plastoquinone + NADPH + (n+1) H(+)(in) = a plastoquinol + NADP(+) + n H(+)(out). Its function is as follows. NDH-1 shuttles electrons from an unknown electron donor, via FMN and iron-sulfur (Fe-S) centers, to quinones in the respiratory and/or the photosynthetic chain. The immediate electron acceptor for the enzyme in this species is believed to be plastoquinone. Couples the redox reaction to proton translocation, and thus conserves the redox energy in a proton gradient. Cyanobacterial NDH-1 also plays a role in inorganic carbon-concentration. This chain is NAD(P)H-quinone oxidoreductase subunit K, found in Synechococcus sp. (strain CC9902).